The primary structure comprises 90 residues: Small ribosomal subunit protein uS15c (90 aa).

Belongs to the universal ribosomal protein uS15 family. As to quaternary structure, part of the 30S ribosomal subunit.

It localises to the plastid. The protein localises to the chloroplast. The sequence is that of Small ribosomal subunit protein uS15c (rps15) from Manihot esculenta (Cassava).